We begin with the raw amino-acid sequence, 401 residues long: Decapping and exoribonuclease protein (401 aa).

The disordered stretch occupies residues 1–27; that stretch reads MEGNKSMQREKIDRPMKRGPEQNSLSP. The span at 7–20 shows a compositional bias: basic and acidic residues; that stretch reads MQREKIDRPMKRGP. Residues Arg-69, Glu-114, and 149-151 each bind substrate; that span reads WRG. Glu-210 serves as a coordination point for Mg(2+). Residues Cys-235 and Glu-252 each contribute to the substrate site. Glu-252, Asp-254, Glu-271, and Leu-272 together coordinate Mg(2+). Positions 273 and 298 each coordinate substrate.

The protein belongs to the DXO/Dom3Z family. Mg(2+) serves as cofactor.

The protein localises to the nucleus. The catalysed reaction is a 5'-end triphospho-ribonucleoside in mRNA + H2O = a 5'-end phospho-ribonucleoside in mRNA + diphosphate + H(+). The enzyme catalyses a 5'-end NAD(+)-phospho-ribonucleoside in mRNA + H2O = a 5'-end phospho-ribonucleoside in mRNA + NAD(+) + H(+). It carries out the reaction a 5'-end NAD(+)-phospho-ribonucleoside in snoRNA + H2O = a 5'-end phospho-ribonucleoside in snoRNA + NAD(+) + H(+). It catalyses the reaction a 5'-end (N(7)-methyl 5'-triphosphoguanosine)-ribonucleoside-ribonucleotide in mRNA + H2O = a (N(7)-methyl 5'-triphosphoguanosine)-nucleoside + a 5'-end phospho-ribonucleoside in mRNA + H(+). The catalysed reaction is a 5'-end FAD-phospho-ribonucleoside in mRNA + H2O = a 5'-end phospho-ribonucleoside in mRNA + FAD + H(+). The enzyme catalyses a 5'-end CoA-ribonucleoside in mRNA + H2O = 3'-dephospho-CoA + a 5'-end phospho-ribonucleoside in mRNA + H(+). In terms of biological role, decapping enzyme for NAD-capped RNAs: specifically hydrolyzes the nicotinamide adenine dinucleotide (NAD) cap from a subset of RNAs by removing the entire NAD moiety from the 5'-end of an NAD-capped RNA. The NAD-cap is present at the 5'-end of some RNAs and snoRNAs. In contrast to the canonical 5'-end N7 methylguanosine (m7G) cap, the NAD cap promotes mRNA decay. Also acts as a non-canonical decapping enzyme that removes the entire cap structure of m7G capped or incompletely capped RNAs and mediates their subsequent degradation. Specifically degrades pre-mRNAs with a defective 5'-end m7G cap and is part of a pre-mRNA capping quality control. Has decapping activity toward incomplete 5'-end m7G cap mRNAs such as unmethylated 5'-end-capped RNA (cap0), while it has no activity toward 2'-O-ribose methylated m7G cap (cap1). Also has 5'-3' exoribonuclease activities: The 5'-end monophosphate RNA is then degraded by the 5'-3' exoribonuclease activity, enabling this enzyme to decap and degrade incompletely capped mRNAs. Also possesses RNA 5'-pyrophosphohydrolase activity by hydrolyzing the 5'-end triphosphate to release pyrophosphates. Exhibits decapping activity towards FAD-capped RNAs. Exhibits decapping activity towards dpCoA-capped RNAs in vitro. The sequence is that of Decapping and exoribonuclease protein from Xenopus laevis (African clawed frog).